The following is a 430-amino-acid chain: tRNA(Ile)-lysidine synthase (430 aa).

21–26 (SGGLDS) is an ATP binding site.

The protein belongs to the tRNA(Ile)-lysidine synthase family.

It localises to the cytoplasm. It carries out the reaction cytidine(34) in tRNA(Ile2) + L-lysine + ATP = lysidine(34) in tRNA(Ile2) + AMP + diphosphate + H(+). Its function is as follows. Ligates lysine onto the cytidine present at position 34 of the AUA codon-specific tRNA(Ile) that contains the anticodon CAU, in an ATP-dependent manner. Cytidine is converted to lysidine, thus changing the amino acid specificity of the tRNA from methionine to isoleucine. This chain is tRNA(Ile)-lysidine synthase, found in Salmonella heidelberg (strain SL476).